A 178-amino-acid polypeptide reads, in one-letter code: Large ribosomal subunit protein uL6 (178 aa).

This sequence belongs to the universal ribosomal protein uL6 family. As to quaternary structure, part of the 50S ribosomal subunit.

In terms of biological role, this protein binds to the 23S rRNA, and is important in its secondary structure. It is located near the subunit interface in the base of the L7/L12 stalk, and near the tRNA binding site of the peptidyltransferase center. The polypeptide is Large ribosomal subunit protein uL6 (Streptococcus sanguinis (strain SK36)).